A 461-amino-acid polypeptide reads, in one-letter code: Ornithine decarboxylase (461 aa).

The residue at position 69 (lysine 69) is an N6-(pyridoxal phosphate)lysine. Residues serine 200, glycine 237, and 274–277 (EPGR) contribute to the pyridoxal 5'-phosphate site. Serine 303 carries the post-translational modification Phosphoserine; by CK2. 331–332 (YD) contributes to the substrate binding site. The active-site Proton donor; shared with dimeric partner is the cysteine 360. At cysteine 360 the chain carries S-nitrosocysteine; in inhibited form. Aspartate 361 contributes to the substrate binding site. Tyrosine 389 lines the pyridoxal 5'-phosphate pocket.

Belongs to the Orn/Lys/Arg decarboxylase class-II family. In terms of assembly, homodimer. Only the dimer is catalytically active, as the active sites are constructed of residues from both monomers. Does not form a heterodimer with AZIN2. Pyridoxal 5'-phosphate serves as cofactor. In terms of processing, S-Nitrosylation inhibits the enzyme. S-Nitrosylated in vitro on 4 cysteine residues.

It carries out the reaction L-ornithine + H(+) = putrescine + CO2. The protein operates within amine and polyamine biosynthesis; putrescine biosynthesis via L-ornithine pathway; putrescine from L-ornithine: step 1/1. Inhibited by S-nitrosylation. Inhibited by antizymes (AZs) OAZ1, OAZ2 and OAZ3 in response to polyamine levels. AZs inhibit the assembly of the functional homodimer by binding to ODC monomers. Additionally, OAZ1 targets ODC monomers for ubiquitin-independent proteolytic destruction by the 26S proteasome. Inhibited by 1-amino-oxy-3-aminopropane (APA, an isosteric analog of putrescine). Irreversibly inhibited by alpha-difluoromethylornithine (DFMO). Catalyzes the first and rate-limiting step of polyamine biosynthesis that converts ornithine into putrescine, which is the precursor for the polyamines, spermidine and spermine. Polyamines are essential for cell proliferation and are implicated in cellular processes, ranging from DNA replication to apoptosis. The protein is Ornithine decarboxylase (ODC1) of Homo sapiens (Human).